We begin with the raw amino-acid sequence, 381 residues long: DNA double-strand break repair protein Mre11 (381 aa).

Mn(2+) contacts are provided by aspartate 9, histidine 11, aspartate 50, and aspartate 85. Histidine 86 serves as the catalytic Proton donor. Mn(2+) is bound by residues histidine 156, histidine 187, and histidine 189.

This sequence belongs to the MRE11/RAD32 family. Homodimer. Forms a heterotetramer composed of two Mre11 subunits and two Rad50 subunits. Requires Mn(2+) as cofactor.

Its activity is regulated as follows. Nuclease activity is regulated by Rad50. Its function is as follows. Part of the Rad50/Mre11 complex, which is involved in the early steps of DNA double-strand break (DSB) repair. The complex may facilitate opening of the processed DNA ends to aid in the recruitment of HerA and NurA. Mre11 binds to DSB ends and has both double-stranded 3'-5' exonuclease activity and single-stranded endonuclease activity. This Saccharolobus solfataricus (strain ATCC 35092 / DSM 1617 / JCM 11322 / P2) (Sulfolobus solfataricus) protein is DNA double-strand break repair protein Mre11.